A 634-amino-acid chain; its full sequence is MKSFKNKNTLRRKKAFPVFTKILLVSFLVWVLKCSNNCNNGNGSGDSFDFRNKRTLAQKQHEHHHHHHHQHQHQHQAPHQAHHHHHHGEVNHQAPQVHQQVHGQDQAHHHHHHHHHQLQPQQLQGTVANPPSNEPVVKTQVFREARPGGGFKAYEEKYESKHYKLKENVVDGKKDCDEKYEAANYAFSEECPYTVNDYSQENGPNIFALRKRFPLGMNDEDEEGKEALAIKDKLPGGLDEYQNQLYGICNETCTTCGPAAIDYVPADAPNGYAYGGSAHDGSHGNLRGHGNKGSEGYGYEAPYNPGFNGAPGSNGMQNYVPPHGAGYSAPYGVPHGAAHGSRYSSFSSVNKYGKHGDEKHHSSKKHEGNDGEGEKKKKSKKHKDHDGEKKKSKKHKDNEDAESVKSKKHKSHDCEKKKSKKHKDNEDAESVKSKKSVKEKGEKHNGKKPCSKKTNEENKNKEKTNNLKSDGSKAHEKKENETKNTAGENKKVDSTSADNKSTNAATPGAKDKTQGGKTDKTGASTNAATNKGQCAAEGATKGATKEASTSKEATKEASTSKGATKEASTTEGATKGASTTAGSTTGATTGANAVQSKDGTADKNAANNGEQVMSRGQAQLQEAGKKKKKRGCCG.

Positions 1-34 (MKSFKNKNTLRRKKAFPVFTKILLVSFLVWVLKC) are cleaved as a signal peptide. Asn42 carries an N-linked (GlcNAc...) asparagine glycan. Basic residues predominate over residues 57 to 87 (AQKQHEHHHHHHHQHQHQHQAPHQAHHHHHH). Disordered stretches follow at residues 57 to 143 (AQKQ…QVFR) and 347 to 634 (SSVN…GCCG). Low complexity predominate over residues 95-104 (PQVHQQVHGQ). Positions 108 to 117 (HHHHHHHHHQ) are enriched in basic residues. 2 stretches are compositionally biased toward basic and acidic residues: residues 354–375 (KHGD…EGEK) and 396–405 (KDNEDAESVK). Positions 406-422 (SKKHKSHDCEKKKSKKH) are enriched in basic residues. Composition is skewed to basic and acidic residues over residues 423–444 (KDNE…GEKH) and 453–493 (KTNE…KKVD). Residues 494-505 (STSADNKSTNAA) show a composition bias toward polar residues. Residues 509-520 (AKDKTQGGKTDK) are compositionally biased toward basic and acidic residues. 4 consecutive repeat copies span residues 540–549 (TKGATKEAST), 550–559 (SKEATKEAST), 560–569 (SKGATKEAST), and 570–579 (TEGATKGAST). Positions 540 to 580 (TKGATKEASTSKEATKEASTSKGATKEASTTEGATKGASTT) are 4 X 10 AA tandem repeats of [TS]-[KE]-[GE]-A-T-K-[EG]-A-S-T. Residues 567–591 (ASTTEGATKGASTTAGSTTGATTGA) show a composition bias toward low complexity. Residues 605–620 (AANNGEQVMSRGQAQL) show a composition bias toward polar residues. Positions 625–634 (KKKKKRGCCG) are enriched in basic residues.

The protein resides in the secreted. Its function is as follows. KAHRP might mimick human histidine-rich glycoproteins to anchor host thrombospondin or a parasite analog in a binding complex with the endothelial cell receptor. This chain is Knob-associated histidine-rich protein, found in Plasmodium falciparum (isolate FCR-3 / Gambia).